Consider the following 419-residue polypeptide: UDP-N-acetylglucosamine 1-carboxyvinyltransferase (419 aa).

K22–N23 contacts phosphoenolpyruvate. Residue R93 coordinates UDP-N-acetyl-alpha-D-glucosamine. C117 functions as the Proton donor in the catalytic mechanism. Position 117 is a 2-(S-cysteinyl)pyruvic acid O-phosphothioketal (C117). Residues D306 and V328 each coordinate UDP-N-acetyl-alpha-D-glucosamine.

This sequence belongs to the EPSP synthase family. MurA subfamily.

The protein resides in the cytoplasm. The catalysed reaction is phosphoenolpyruvate + UDP-N-acetyl-alpha-D-glucosamine = UDP-N-acetyl-3-O-(1-carboxyvinyl)-alpha-D-glucosamine + phosphate. Its pathway is cell wall biogenesis; peptidoglycan biosynthesis. Its function is as follows. Cell wall formation. Adds enolpyruvyl to UDP-N-acetylglucosamine. The protein is UDP-N-acetylglucosamine 1-carboxyvinyltransferase of Thioalkalivibrio sulfidiphilus (strain HL-EbGR7).